Consider the following 417-residue polypeptide: Putative competence-damage inducible protein (417 aa).

The protein belongs to the CinA family.

The chain is Putative competence-damage inducible protein from Leuconostoc citreum (strain KM20).